Reading from the N-terminus, the 420-residue chain is G2/mitotic-specific cyclin-A (420 aa).

The disordered stretch occupies residues 64-93 (VQGSRIQPTRAAKEKLKPPQNISDSQLVND). A compositionally biased stretch (polar residues) spans 83-93 (QNISDSQLVND).

Belongs to the cyclin family. Cyclin AB subfamily.

Its function is as follows. Essential for the control of the cell cycle at the G2/M (mitosis) transition. Interacts with the CDC2 and CDK2 protein kinases to form MPF. G2/M cyclins accumulate steadily during G2 and are abruptly destroyed at mitosis. The chain is G2/mitotic-specific cyclin-A from Hydra viridissima (Green hydra).